The primary structure comprises 370 residues: Anhydro-N-acetylmuramic acid kinase (370 aa).

13-20 (GTSMDGVD) serves as a coordination point for ATP.

The protein belongs to the anhydro-N-acetylmuramic acid kinase family.

It carries out the reaction 1,6-anhydro-N-acetyl-beta-muramate + ATP + H2O = N-acetyl-D-muramate 6-phosphate + ADP + H(+). It participates in amino-sugar metabolism; 1,6-anhydro-N-acetylmuramate degradation. Its pathway is cell wall biogenesis; peptidoglycan recycling. Catalyzes the specific phosphorylation of 1,6-anhydro-N-acetylmuramic acid (anhMurNAc) with the simultaneous cleavage of the 1,6-anhydro ring, generating MurNAc-6-P. Is required for the utilization of anhMurNAc either imported from the medium or derived from its own cell wall murein, and thus plays a role in cell wall recycling. In Vibrio vulnificus (strain YJ016), this protein is Anhydro-N-acetylmuramic acid kinase.